Reading from the N-terminus, the 511-residue chain is 2-isopropylmalate synthase (511 aa).

Residues 5–267 enclose the Pyruvate carboxyltransferase domain; it reads LIVFDTTLRD…DTNVDISQIV (263 aa). Positions 14, 202, 204, and 238 each coordinate Mn(2+). Residues 393-511 form a regulatory domain region; the sequence is KLSWLKVVSE…YPVERAYPQV (119 aa).

The protein belongs to the alpha-IPM synthase/homocitrate synthase family. LeuA type 1 subfamily. In terms of assembly, homodimer. Mn(2+) is required as a cofactor.

It is found in the cytoplasm. It carries out the reaction 3-methyl-2-oxobutanoate + acetyl-CoA + H2O = (2S)-2-isopropylmalate + CoA + H(+). The protein operates within amino-acid biosynthesis; L-leucine biosynthesis; L-leucine from 3-methyl-2-oxobutanoate: step 1/4. Catalyzes the condensation of the acetyl group of acetyl-CoA with 3-methyl-2-oxobutanoate (2-ketoisovalerate) to form 3-carboxy-3-hydroxy-4-methylpentanoate (2-isopropylmalate). The sequence is that of 2-isopropylmalate synthase from Nitrosococcus oceani (strain ATCC 19707 / BCRC 17464 / JCM 30415 / NCIMB 11848 / C-107).